Here is a 354-residue protein sequence, read N- to C-terminus: Probable serine acetyltransferase 2 (354 aa).

The protein belongs to the transferase hexapeptide repeat family. In terms of assembly, homomultimer.

It carries out the reaction L-serine + acetyl-CoA = O-acetyl-L-serine + CoA. It functions in the pathway amino-acid biosynthesis; L-cysteine biosynthesis; L-cysteine from L-serine: step 1/2. This Oryza sativa subsp. japonica (Rice) protein is Probable serine acetyltransferase 2 (SAT2).